The sequence spans 171 residues: Der GTPase-activating protein YihI (171 aa).

Disordered regions lie at residues methionine 1 to glutamate 99 and glycine 145 to asparagine 171. The span at threonine 20–aspartate 30 shows a compositional bias: basic and acidic residues. A compositionally biased stretch (low complexity) spans histidine 40–serine 59. Over residues tyrosine 148–glutamine 160 the composition is skewed to acidic residues.

This sequence belongs to the YihI family. As to quaternary structure, interacts with Der.

Functionally, a GTPase-activating protein (GAP) that modifies Der/EngA GTPase function. May play a role in ribosome biogenesis. The chain is Der GTPase-activating protein YihI from Enterobacter sp. (strain 638).